The following is a 163-amino-acid chain: UPF0416 protein RBE_0909 (163 aa).

This sequence belongs to the UPF0416 family.

This is UPF0416 protein RBE_0909 from Rickettsia bellii (strain RML369-C).